The sequence spans 203 residues: Enterotoxin-like toxin X (203 aa).

The segment at 164-180 (YTLESHKELQKNRENVE) is sialic acid-binding motif.

It belongs to the staphylococcal/streptococcal toxin family.

It is found in the secreted. Plays a role in the inhibition of the host innate immune system. Inhibits phagocytosis and killing by human neutrophils by interacting with multiple neutrophil surface glycoproteins in a sialic acid-dependent manner. The polypeptide is Enterotoxin-like toxin X (Staphylococcus aureus).